Here is a 143-residue protein sequence, read N- to C-terminus: Putative pre-16S rRNA nuclease (143 aa).

Belongs to the YqgF nuclease family.

Its subcellular location is the cytoplasm. Its function is as follows. Could be a nuclease involved in processing of the 5'-end of pre-16S rRNA. The protein is Putative pre-16S rRNA nuclease of Leuconostoc mesenteroides subsp. mesenteroides (strain ATCC 8293 / DSM 20343 / BCRC 11652 / CCM 1803 / JCM 6124 / NCDO 523 / NBRC 100496 / NCIMB 8023 / NCTC 12954 / NRRL B-1118 / 37Y).